Reading from the N-terminus, the 119-residue chain is MAGTGKTVTRVDLCEAVYQKVGLSRTESSAFVELVLKEITDCLERGETVKLSSFGSFMVRKKGQRIGRNPKTGTEVPISPRRVMVFKPSAILKQRINGQQANGKMNGESAPSEFSAETE.

Residues 96–119 (INGQQANGKMNGESAPSEFSAETE) are disordered.

It belongs to the bacterial histone-like protein family. Heterodimer of an alpha and a beta chain.

Its function is as follows. This protein is one of the two subunits of integration host factor, a specific DNA-binding protein that functions in genetic recombination as well as in transcriptional and translational control. In Bradyrhizobium sp. (strain ORS 278), this protein is Integration host factor subunit alpha.